The following is a 525-amino-acid chain: GMP synthase [glutamine-hydrolyzing] (525 aa).

In terms of domain architecture, Glutamine amidotransferase type-1 spans 9–207; sequence RILILDFGSQ…VLGICGCEAL (199 aa). Catalysis depends on Cys86, which acts as the Nucleophile. Catalysis depends on residues His181 and Glu183. One can recognise a GMPS ATP-PPase domain in the interval 208–400; the sequence is WTSATIIEDA…LGLPYDMLYR (193 aa). An ATP-binding site is contributed by 235 to 241; it reads SGGVDSS.

As to quaternary structure, homodimer.

It carries out the reaction XMP + L-glutamine + ATP + H2O = GMP + L-glutamate + AMP + diphosphate + 2 H(+). Its pathway is purine metabolism; GMP biosynthesis; GMP from XMP (L-Gln route): step 1/1. Catalyzes the synthesis of GMP from XMP. This chain is GMP synthase [glutamine-hydrolyzing], found in Yersinia pestis bv. Antiqua (strain Antiqua).